Reading from the N-terminus, the 53-residue chain is uncharacterized protein (53 aa).

It localises to the mitochondrion. This is an uncharacterized protein from Saccharomyces cerevisiae (strain ATCC 204508 / S288c) (Baker's yeast).